Here is a 433-residue protein sequence, read N- to C-terminus: UPF0761 membrane protein Sde_0901 (433 aa).

The next 6 helical transmembrane spans lie at 46 to 66 (LFAM…FPAF), 103 to 123 (LSAA…TNIE), 142 to 162 (FLLY…GLAM), 185 to 205 (FFSY…FAAV), 217 to 237 (IGGI…GWVV), and 247 to 267 (GAFA…MIIL).

The protein belongs to the UPF0761 family.

It is found in the cell inner membrane. The chain is UPF0761 membrane protein Sde_0901 from Saccharophagus degradans (strain 2-40 / ATCC 43961 / DSM 17024).